Here is a 259-residue protein sequence, read N- to C-terminus: Small ribosomal subunit protein eS4 (259 aa).

The S4 RNA-binding domain maps to 41 to 100 (LPLSLFLRNRLKYALNYTEAKKILTQRVVRVDGKVRTCHKFPTGFMDVVAIERTNEYFRM).

Belongs to the eukaryotic ribosomal protein eS4 family.

The chain is Small ribosomal subunit protein eS4 (rps-4) from Caenorhabditis elegans.